The sequence spans 382 residues: Putative 12-oxophytodienoate reductase 3 (382 aa).

Residues Pro-37–Thr-39, Ala-70, and Gln-112 contribute to the FMN site. Over residues Ser-120–Gln-138 the composition is skewed to polar residues. Residues Ser-120–Val-147 form a disordered region. Position 184–187 (His-184–His-187) interacts with substrate. Tyr-189 serves as the catalytic Proton donor. Residue Arg-236 coordinates FMN. Arg-277 provides a ligand contact to substrate. FMN-binding positions include Gly-307 and Gly-328–Arg-329.

It belongs to the NADH:flavin oxidoreductase/NADH oxidase family. It depends on FMN as a cofactor.

Functionally, putative oxophytodienoate reductase that may be involved in the biosynthesis or metabolism of oxylipin signaling molecules. The polypeptide is Putative 12-oxophytodienoate reductase 3 (OPR3) (Oryza sativa subsp. japonica (Rice)).